A 507-amino-acid polypeptide reads, in one-letter code: Cuticlin-4 (507 aa).

Residues 1-19 (MFHFTRILAAFLLPTLCFC) form the signal peptide. Topologically, residues 20–471 (GYSTAPSSTV…KTCFSTSRMY (452 aa)) are extracellular. The 239-residue stretch at 42 to 280 (VCETASISLL…YGCSNTQPQC (239 aa)) folds into the ZP domain. The interval 292 to 350 (KTTETAEPYPYDSHESGYPTRPANYPVASSRYPIPTTQAPASYPSSPAPPPPGADIDNG) is disordered. N-linked (GlcNAc...) asparagine glycosylation is found at asparagine 374 and asparagine 408. The helical transmembrane segment at 472-492 (FTLILLCLLFATTVVVFIVIV) threads the bilayer. At 493-507 (QKQRQILAQTAFFKP) the chain is on the cytoplasmic side.

The protein resides in the cell membrane. Plays a role in alae formation and subsequent cuticle attachment in adults. The chain is Cuticlin-4 from Caenorhabditis elegans.